Here is a 968-residue protein sequence, read N- to C-terminus: RNA polymerase-associated protein RapA (968 aa).

Residues 164–334 (DVGRRHAPRV…FARLRLLDPD (171 aa)) form the Helicase ATP-binding domain. 177 to 184 (DEVGLGKT) is a binding site for ATP. The short motif at 280–283 (DEAH) is the DEAH box element. The Helicase C-terminal domain occupies 490-643 (RVEWLMGYLT…HTCPTGRAVY (154 aa)).

This sequence belongs to the SNF2/RAD54 helicase family. RapA subfamily. In terms of assembly, interacts with the RNAP. Has a higher affinity for the core RNAP than for the holoenzyme. Its ATPase activity is stimulated by binding to RNAP.

Its function is as follows. Transcription regulator that activates transcription by stimulating RNA polymerase (RNAP) recycling in case of stress conditions such as supercoiled DNA or high salt concentrations. Probably acts by releasing the RNAP, when it is trapped or immobilized on tightly supercoiled DNA. Does not activate transcription on linear DNA. Probably not involved in DNA repair. The sequence is that of RNA polymerase-associated protein RapA from Erwinia tasmaniensis (strain DSM 17950 / CFBP 7177 / CIP 109463 / NCPPB 4357 / Et1/99).